The chain runs to 290 residues: Small ribosomal subunit biogenesis GTPase RsgA (290 aa).

Residues 61-218 (KSELVRPTVA…IVDTPGFSTL (158 aa)) enclose the CP-type G domain. GTP is bound by residues 110-113 (NKID) and 161-169 (GPSGAGKST). 4 residues coordinate Zn(2+): Cys-243, Cys-248, His-250, and Cys-256.

This sequence belongs to the TRAFAC class YlqF/YawG GTPase family. RsgA subfamily. Monomer. Associates with 30S ribosomal subunit, binds 16S rRNA. Requires Zn(2+) as cofactor.

Its subcellular location is the cytoplasm. Its function is as follows. One of several proteins that assist in the late maturation steps of the functional core of the 30S ribosomal subunit. Helps release RbfA from mature subunits. May play a role in the assembly of ribosomal proteins into the subunit. Circularly permuted GTPase that catalyzes slow GTP hydrolysis, GTPase activity is stimulated by the 30S ribosomal subunit. The chain is Small ribosomal subunit biogenesis GTPase RsgA from Clostridium beijerinckii (strain ATCC 51743 / NCIMB 8052) (Clostridium acetobutylicum).